Consider the following 405-residue polypeptide: uncharacterized protein (405 aa).

Positions 1–20 (MKAKLALSIIGLVLASLVAG) are cleaved as a signal peptide. Cysteine 21 is subject to N-acetylcysteine. A lipid anchor (S-archaeol cysteine) is attached at cysteine 21.

This sequence belongs to the BMP lipoprotein family.

It is found in the cell membrane. This is an uncharacterized protein from Pyrococcus horikoshii (strain ATCC 700860 / DSM 12428 / JCM 9974 / NBRC 100139 / OT-3).